A 102-amino-acid chain; its full sequence is MQKIRKGDKVVMLAGKDKGRTGEVVQVMPKEDRAVVRGVNVVKRHQRQTQTQEAGIINKEAPVHLSNIAIVDKDGKPTRVGFKVVDGKKVRVAKRSGEVIDG.

Belongs to the universal ribosomal protein uL24 family. Part of the 50S ribosomal subunit.

Functionally, one of two assembly initiator proteins, it binds directly to the 5'-end of the 23S rRNA, where it nucleates assembly of the 50S subunit. One of the proteins that surrounds the polypeptide exit tunnel on the outside of the subunit. The polypeptide is Large ribosomal subunit protein uL24 (Rhizobium etli (strain CIAT 652)).